A 312-amino-acid chain; its full sequence is 4-hydroxy-3-methylbut-2-enyl diphosphate reductase (312 aa).

A [4Fe-4S] cluster-binding site is contributed by Cys15. His44 and His77 together coordinate (2E)-4-hydroxy-3-methylbut-2-enyl diphosphate. Positions 44 and 77 each coordinate dimethylallyl diphosphate. Isopentenyl diphosphate contacts are provided by His44 and His77. Cys99 is a binding site for [4Fe-4S] cluster. His127 provides a ligand contact to (2E)-4-hydroxy-3-methylbut-2-enyl diphosphate. A dimethylallyl diphosphate-binding site is contributed by His127. An isopentenyl diphosphate-binding site is contributed by His127. Glu129 serves as the catalytic Proton donor. Thr167 contributes to the (2E)-4-hydroxy-3-methylbut-2-enyl diphosphate binding site. Cys197 is a binding site for [4Fe-4S] cluster. The (2E)-4-hydroxy-3-methylbut-2-enyl diphosphate site is built by Ser225, Ser226, Asn227, and Ser269. Residues Ser225, Ser226, Asn227, and Ser269 each coordinate dimethylallyl diphosphate. Residues Ser225, Ser226, Asn227, and Ser269 each coordinate isopentenyl diphosphate.

The protein belongs to the IspH family. It depends on [4Fe-4S] cluster as a cofactor.

It carries out the reaction isopentenyl diphosphate + 2 oxidized [2Fe-2S]-[ferredoxin] + H2O = (2E)-4-hydroxy-3-methylbut-2-enyl diphosphate + 2 reduced [2Fe-2S]-[ferredoxin] + 2 H(+). The enzyme catalyses dimethylallyl diphosphate + 2 oxidized [2Fe-2S]-[ferredoxin] + H2O = (2E)-4-hydroxy-3-methylbut-2-enyl diphosphate + 2 reduced [2Fe-2S]-[ferredoxin] + 2 H(+). It participates in isoprenoid biosynthesis; dimethylallyl diphosphate biosynthesis; dimethylallyl diphosphate from (2E)-4-hydroxy-3-methylbutenyl diphosphate: step 1/1. The protein operates within isoprenoid biosynthesis; isopentenyl diphosphate biosynthesis via DXP pathway; isopentenyl diphosphate from 1-deoxy-D-xylulose 5-phosphate: step 6/6. In terms of biological role, catalyzes the conversion of 1-hydroxy-2-methyl-2-(E)-butenyl 4-diphosphate (HMBPP) into a mixture of isopentenyl diphosphate (IPP) and dimethylallyl diphosphate (DMAPP). Acts in the terminal step of the DOXP/MEP pathway for isoprenoid precursor biosynthesis. The protein is 4-hydroxy-3-methylbut-2-enyl diphosphate reductase of Aromatoleum aromaticum (strain DSM 19018 / LMG 30748 / EbN1) (Azoarcus sp. (strain EbN1)).